A 334-amino-acid polypeptide reads, in one-letter code: Anthranilate phosphoribosyltransferase (334 aa).

Residues glycine 79, 82 to 83, serine 87, 89 to 92, 107 to 115, and serine 119 contribute to the 5-phospho-alpha-D-ribose 1-diphosphate site; these read GD, NIST, and KHGNRSISS. Residue glycine 79 participates in anthranilate binding. Serine 91 lines the Mg(2+) pocket. An anthranilate-binding site is contributed by asparagine 110. Arginine 165 provides a ligand contact to anthranilate. 2 residues coordinate Mg(2+): aspartate 224 and glutamate 225.

It belongs to the anthranilate phosphoribosyltransferase family. In terms of assembly, homodimer. The cofactor is Mg(2+).

It carries out the reaction N-(5-phospho-beta-D-ribosyl)anthranilate + diphosphate = 5-phospho-alpha-D-ribose 1-diphosphate + anthranilate. The protein operates within amino-acid biosynthesis; L-tryptophan biosynthesis; L-tryptophan from chorismate: step 2/5. Catalyzes the transfer of the phosphoribosyl group of 5-phosphorylribose-1-pyrophosphate (PRPP) to anthranilate to yield N-(5'-phosphoribosyl)-anthranilate (PRA). This is Anthranilate phosphoribosyltransferase from Streptococcus pneumoniae (strain 70585).